Consider the following 124-residue polypeptide: Large ribosomal subunit protein eL31 (124 aa).

Belongs to the eukaryotic ribosomal protein eL31 family. As to quaternary structure, component of the large ribosomal subunit.

Its subcellular location is the cytoplasm. Functionally, component of the large ribosomal subunit. The ribosome is a large ribonucleoprotein complex responsible for the synthesis of proteins in the cell. The chain is Large ribosomal subunit protein eL31 (rpl31) from Paralichthys olivaceus (Bastard halibut).